We begin with the raw amino-acid sequence, 375 residues long: Fasciculation and elongation protein zeta-2 (375 aa).

Residues 1–42 are disordered; sequence MAADGDWQDFYEFQEPAGSVRDQENCNASPEAGAGAHAGGDS. A phosphoserine mark is found at S130, S171, and S190. The stretch at 156 to 177 forms a coiled coil; it reads TADQVIEEIEEMMQESPDLEDD. Positions 206–281 form a coiled coil; it reads ERVKRLSVSE…AKKKKKLKNG (76 aa). The segment at 265-297 is disordered; sequence QKEHKETAKKKKKLKNGSSQNGRNERSHMPGTR.

The protein belongs to the zygin family. In terms of assembly, homodimer; disulfide-linked. May form heterodimers with FEZ1. Interacts with synaptotagmin.

Involved in axonal outgrowth and fasciculation. The protein is Fasciculation and elongation protein zeta-2 (Fez2) of Rattus norvegicus (Rat).